The chain runs to 179 residues: ATP synthase subunit delta (179 aa).

Belongs to the ATPase delta chain family. F-type ATPases have 2 components, F(1) - the catalytic core - and F(0) - the membrane proton channel. F(1) has five subunits: alpha(3), beta(3), gamma(1), delta(1), epsilon(1). F(0) has three main subunits: a(1), b(2) and c(10-14). The alpha and beta chains form an alternating ring which encloses part of the gamma chain. F(1) is attached to F(0) by a central stalk formed by the gamma and epsilon chains, while a peripheral stalk is formed by the delta and b chains.

It is found in the cell membrane. F(1)F(0) ATP synthase produces ATP from ADP in the presence of a proton or sodium gradient. F-type ATPases consist of two structural domains, F(1) containing the extramembraneous catalytic core and F(0) containing the membrane proton channel, linked together by a central stalk and a peripheral stalk. During catalysis, ATP synthesis in the catalytic domain of F(1) is coupled via a rotary mechanism of the central stalk subunits to proton translocation. In terms of biological role, this protein is part of the stalk that links CF(0) to CF(1). It either transmits conformational changes from CF(0) to CF(1) or is implicated in proton conduction. The protein is ATP synthase subunit delta of Metamycoplasma arthritidis (strain 158L3-1) (Mycoplasma arthritidis).